A 443-amino-acid polypeptide reads, in one-letter code: Threonine/serine transporter TdcC (443 aa).

11 helical membrane passes run 22–42 (TTWTLGLFGTAIGAGVLFFPI), 44–64 (AGFGGLIPILLMLVLAYPIAF), 97–117 (GVVITFLYFFAICPLLWIYGV), 140–160 (FVALFLLLLMAFVIWFGKDLM), 163–183 (VMSYLVWPFIASLVLISLSLI), 207–227 (ILVTVWLGISIMVFSFNFSPI), 261–281 (MLMVAVVMFFAFSCLFTLSPA), 319–339 (ASIIALVAIFKSFFGHYLGTL), 366–386 (ISMIFIMGSTWVVAYANPNIL), 389–409 (IEAMGAPIIASLLCLLPMYAI), and 423–443 (DNVFVTVIGLLTILNIVYKLF).

This sequence belongs to the amino acid/polyamine transporter 2 family. SdaC/TdcC subfamily.

It is found in the cell inner membrane. It catalyses the reaction L-threonine(in) + H(+)(in) = L-threonine(out) + H(+)(out). The catalysed reaction is L-serine(in) + H(+)(in) = L-serine(out) + H(+)(out). In terms of biological role, involved in the import of threonine and serine into the cell, with the concomitant import of a proton (symport system). The protein is Threonine/serine transporter TdcC of Citrobacter koseri (strain ATCC BAA-895 / CDC 4225-83 / SGSC4696).